Here is a 543-residue protein sequence, read N- to C-terminus: CTP synthase (543 aa).

Residues 1 to 265 (MTRYIFVTGG…DDFVVERFGL (265 aa)) form an amidoligase domain region. S13 contributes to the CTP binding site. S13 is a UTP binding site. Residues 14–19 (SLGKGI) and D71 each bind ATP. D71 and E139 together coordinate Mg(2+). CTP contacts are provided by residues 146 to 148 (DIE), 186 to 191 (KTKPTQ), and K222. UTP is bound by residues 186–191 (KTKPTQ) and K222. Positions 290 to 541 (TIAMVGKYME…VKAALAQHQK (252 aa)) constitute a Glutamine amidotransferase type-1 domain. G351 contacts L-glutamine. C378 acts as the Nucleophile; for glutamine hydrolysis in catalysis. Residues 379–382 (LGMQ), E402, and R469 each bind L-glutamine. Catalysis depends on residues H514 and E516.

The protein belongs to the CTP synthase family. In terms of assembly, homotetramer.

The catalysed reaction is UTP + L-glutamine + ATP + H2O = CTP + L-glutamate + ADP + phosphate + 2 H(+). It catalyses the reaction L-glutamine + H2O = L-glutamate + NH4(+). It carries out the reaction UTP + NH4(+) + ATP = CTP + ADP + phosphate + 2 H(+). It participates in pyrimidine metabolism; CTP biosynthesis via de novo pathway; CTP from UDP: step 2/2. Allosterically activated by GTP, when glutamine is the substrate; GTP has no effect on the reaction when ammonia is the substrate. The allosteric effector GTP functions by stabilizing the protein conformation that binds the tetrahedral intermediate(s) formed during glutamine hydrolysis. Inhibited by the product CTP, via allosteric rather than competitive inhibition. Functionally, catalyzes the ATP-dependent amination of UTP to CTP with either L-glutamine or ammonia as the source of nitrogen. Regulates intracellular CTP levels through interactions with the four ribonucleotide triphosphates. This Pseudomonas syringae pv. tomato (strain ATCC BAA-871 / DC3000) protein is CTP synthase.